A 266-amino-acid polypeptide reads, in one-letter code: PTS system sorbose-specific EIIC component (266 aa).

Residues 1 to 237 form the PTS EIIC type-4 domain; sequence MEISTLQIIA…GGVGVIIALI (237 aa). 7 helical membrane passes run 3-23, 33-53, 79-99, 100-120, 151-171, 183-203, and 219-239; these read ISTL…MGSV, LIAC…VMLG, IISA…IAIA, LPVA…TVVF, VAIP…SSML, QIAG…MMGV, and YLDF…LIYI.

It localises to the cell inner membrane. In terms of biological role, the phosphoenolpyruvate-dependent sugar phosphotransferase system (PTS), a major carbohydrate active transport system, catalyzes the phosphorylation of incoming sugar substrates concomitant with their translocation across the cell membrane. The enzyme II SorABFM PTS system is involved in L-sorbose transport. This chain is PTS system sorbose-specific EIIC component, found in Klebsiella pneumoniae.